A 410-amino-acid polypeptide reads, in one-letter code: Putative competence-damage inducible protein (410 aa).

This sequence belongs to the CinA family.

The polypeptide is Putative competence-damage inducible protein (Clostridium kluyveri (strain NBRC 12016)).